Here is a 211-residue protein sequence, read N- to C-terminus: Hypoxanthine-guanine phosphoribosyltransferase (211 aa).

The disordered stretch occupies residues 1–20 (MSNSAKSPSGPVGDEGRRNY). Residues K66, 125 to 133 (EDIVDSAIT), K157, and D185 each bind GMP. The active-site Proton acceptor is the D129. D185 provides a ligand contact to Mg(2+).

The protein belongs to the purine/pyrimidine phosphoribosyltransferase family. Requires Mg(2+) as cofactor.

The protein resides in the cytoplasm. The enzyme catalyses IMP + diphosphate = hypoxanthine + 5-phospho-alpha-D-ribose 1-diphosphate. It catalyses the reaction GMP + diphosphate = guanine + 5-phospho-alpha-D-ribose 1-diphosphate. It participates in purine metabolism; IMP biosynthesis via salvage pathway; IMP from hypoxanthine: step 1/1. Its function is as follows. Converts guanine to guanosine monophosphate, and hypoxanthine to inosine monophosphate. Transfers the 5-phosphoribosyl group from 5-phosphoribosylpyrophosphate onto the purine. Plays a central role in the generation of purine nucleotides through the purine salvage pathway. This Leishmania donovani protein is Hypoxanthine-guanine phosphoribosyltransferase.